The following is a 118-amino-acid chain: uncharacterized protein (118 aa).

3 consecutive transmembrane segments (helical) span residues isoleucine 6–valine 26, alanine 43–leucine 63, and isoleucine 84–glutamine 104.

It belongs to the AzlD/HI_1737/HP1330 family.

The protein localises to the cell membrane. This is an uncharacterized protein from Helicobacter pylori (strain J99 / ATCC 700824) (Campylobacter pylori J99).